We begin with the raw amino-acid sequence, 377 residues long: F-box protein At1g11810 (377 aa).

Residues 2–48 (TTTMSTLPVVLVDEILARVPITSLRSLRSTCKKWEASSKTNLVGGKA) enclose the F-box domain.

The protein is F-box protein At1g11810 of Arabidopsis thaliana (Mouse-ear cress).